We begin with the raw amino-acid sequence, 173 residues long: NADH-quinone oxidoreductase subunit B (173 aa).

Residues Cys-52, Cys-53, Cys-117, and Cys-147 each coordinate [4Fe-4S] cluster.

This sequence belongs to the complex I 20 kDa subunit family. In terms of assembly, NDH-1 is composed of 14 different subunits. Subunits NuoB, C, D, E, F, and G constitute the peripheral sector of the complex. [4Fe-4S] cluster serves as cofactor.

It is found in the cell inner membrane. It carries out the reaction a quinone + NADH + 5 H(+)(in) = a quinol + NAD(+) + 4 H(+)(out). In terms of biological role, NDH-1 shuttles electrons from NADH, via FMN and iron-sulfur (Fe-S) centers, to quinones in the respiratory chain. Couples the redox reaction to proton translocation (for every two electrons transferred, four hydrogen ions are translocated across the cytoplasmic membrane), and thus conserves the redox energy in a proton gradient. The protein is NADH-quinone oxidoreductase subunit B of Pelagibacter ubique (strain HTCC1062).